The following is a 118-amino-acid chain: MRNRYIQSFQEAQIGKKQVPQFKAGDTLRLGIKIQEGDKTRIQHFEGVCISIRGNGVDRTFTTRKMGANNIGVEKTFPLYSESLDSIEVLRIGRVRRAKLYYLRSRRGKAARIKELRK.

Belongs to the bacterial ribosomal protein bL19 family.

Functionally, this protein is located at the 30S-50S ribosomal subunit interface and may play a role in the structure and function of the aminoacyl-tRNA binding site. In Helicobacter hepaticus (strain ATCC 51449 / 3B1), this protein is Large ribosomal subunit protein bL19.